Here is an 89-residue protein sequence, read N- to C-terminus: Small ribosomal subunit protein uS15 (89 aa).

The protein belongs to the universal ribosomal protein uS15 family. In terms of assembly, part of the 30S ribosomal subunit. Forms a bridge to the 50S subunit in the 70S ribosome, contacting the 23S rRNA.

Functionally, one of the primary rRNA binding proteins, it binds directly to 16S rRNA where it helps nucleate assembly of the platform of the 30S subunit by binding and bridging several RNA helices of the 16S rRNA. Forms an intersubunit bridge (bridge B4) with the 23S rRNA of the 50S subunit in the ribosome. The protein is Small ribosomal subunit protein uS15 of Aliivibrio fischeri (strain ATCC 700601 / ES114) (Vibrio fischeri).